A 186-amino-acid polypeptide reads, in one-letter code: Potassium-transporting ATPase KdpC subunit (186 aa).

The helical transmembrane segment at 10–30 (LTIITMVLCGFLFPLAITLIG) threads the bilayer.

This sequence belongs to the KdpC family. The system is composed of three essential subunits: KdpA, KdpB and KdpC.

The protein localises to the cell membrane. Part of the high-affinity ATP-driven potassium transport (or Kdp) system, which catalyzes the hydrolysis of ATP coupled with the electrogenic transport of potassium into the cytoplasm. This subunit acts as a catalytic chaperone that increases the ATP-binding affinity of the ATP-hydrolyzing subunit KdpB by the formation of a transient KdpB/KdpC/ATP ternary complex. The chain is Potassium-transporting ATPase KdpC subunit from Staphylococcus aureus (strain MRSA252).